The following is a 441-amino-acid chain: UDP-N-acetylglucosamine--N-acetylmuramyl-(pentapeptide) pyrophosphoryl-undecaprenol N-acetylglucosamine transferase (441 aa).

UDP-N-acetyl-alpha-D-glucosamine is bound by residues 28-30, Asn140, Arg176, Ser204, Ile257, and Gln302; that span reads TGG.

This sequence belongs to the glycosyltransferase 28 family. MurG subfamily.

Its subcellular location is the cell inner membrane. It catalyses the reaction di-trans,octa-cis-undecaprenyl diphospho-N-acetyl-alpha-D-muramoyl-L-alanyl-D-glutamyl-meso-2,6-diaminopimeloyl-D-alanyl-D-alanine + UDP-N-acetyl-alpha-D-glucosamine = di-trans,octa-cis-undecaprenyl diphospho-[N-acetyl-alpha-D-glucosaminyl-(1-&gt;4)]-N-acetyl-alpha-D-muramoyl-L-alanyl-D-glutamyl-meso-2,6-diaminopimeloyl-D-alanyl-D-alanine + UDP + H(+). It functions in the pathway cell wall biogenesis; peptidoglycan biosynthesis. Functionally, cell wall formation. Catalyzes the transfer of a GlcNAc subunit on undecaprenyl-pyrophosphoryl-MurNAc-pentapeptide (lipid intermediate I) to form undecaprenyl-pyrophosphoryl-MurNAc-(pentapeptide)GlcNAc (lipid intermediate II). The polypeptide is UDP-N-acetylglucosamine--N-acetylmuramyl-(pentapeptide) pyrophosphoryl-undecaprenol N-acetylglucosamine transferase (Xanthomonas oryzae pv. oryzae (strain MAFF 311018)).